Reading from the N-terminus, the 178-residue chain is Mediator of RNA polymerase II transcription subunit 30 (178 aa).

Residues 1–22 (MSTPPLAASGMAPGPFAGPQAQ) form a disordered region. Position 2 is an N-acetylserine (S2). Over residues 10-22 (GMAPGPFAGPQAQ) the composition is skewed to low complexity. 2 coiled-coil regions span residues 70-94 (TYQD…KLRL) and 133-173 (RFAS…INAM).

Belongs to the Mediator complex subunit 30 family. Component of the Mediator complex, which is composed of MED1, MED4, MED6, MED7, MED8, MED9, MED10, MED11, MED12, MED13, MED13L, MED14, MED15, MED16, MED17, MED18, MED19, MED20, MED21, MED22, MED23, MED24, MED25, MED26, MED27, MED29, MED30, MED31, CCNC, CDK8 and CDC2L6/CDK11. The MED12, MED13, CCNC and CDK8 subunits form a distinct module termed the CDK8 module. Mediator containing the CDK8 module is less active than Mediator lacking this module in supporting transcriptional activation. Individual preparations of the Mediator complex lacking one or more distinct subunits have been variously termed ARC, CRSP, DRIP, PC2, SMCC and TRAP. In terms of tissue distribution, expressed in brain, heart, kidney, liver, lung, pancreas, placenta and skeletal muscle.

It localises to the nucleus. Component of the Mediator complex, a coactivator involved in the regulated transcription of nearly all RNA polymerase II-dependent genes. Mediator functions as a bridge to convey information from gene-specific regulatory proteins to the basal RNA polymerase II transcription machinery. Mediator is recruited to promoters by direct interactions with regulatory proteins and serves as a scaffold for the assembly of a functional preinitiation complex with RNA polymerase II and the general transcription factors. This chain is Mediator of RNA polymerase II transcription subunit 30 (MED30), found in Homo sapiens (Human).